A 469-amino-acid chain; its full sequence is CBL-interacting serine/threonine-protein kinase 16 (469 aa).

The Protein kinase domain maps to 15 to 278 (YNIGRLLGTG…MSEIKMIPWF (264 aa)). Residues 21–29 (LGTGNFAKV) and K44 contribute to the ATP site. D139 serves as the catalytic Proton acceptor. Residues 157–193 (DFGLSALMMPEGLGGRRGSSDDLLHTRCGTPAYVAPE) form an activation loop region. S161 is subject to Phosphoserine. T182 is subject to Phosphothreonine. Positions 290-320 (IDETIPSPPEPPTKKKKKDLNEKEDDGASPR) are disordered. In terms of domain architecture, NAF spans 317 to 342 (ASPRSFNAFQFITSMSSGFDLSNLFE). The PPI stretch occupies residues 346 to 376 (KPKRMFTSKFPAKSVKERLETAAREMDMRVK). The tract at residues 447–469 (DDEDDVTTNDNVDTNDNKINNVS) is disordered. The span at 454-469 (TNDNVDTNDNKINNVS) shows a compositional bias: low complexity.

The protein belongs to the protein kinase superfamily. CAMK Ser/Thr protein kinase family. SNF1 subfamily. As to quaternary structure, part of a K(+)-channel calcium-sensing kinase/phosphatase complex composed by a calcium sensor CBL (CBL1, CBL2, CBL3 or CBL9), a kinase CIPK (CIPK6, CIPK16 or CIPK23), a phosphatase PP2C (AIP1) and a K(+)-channel (AKT1). Interacts with AKT1, CBL1, CBL2, CBL3 and CBL9. The cofactor is Mn(2+).

It carries out the reaction L-seryl-[protein] + ATP = O-phospho-L-seryl-[protein] + ADP + H(+). The enzyme catalyses L-threonyl-[protein] + ATP = O-phospho-L-threonyl-[protein] + ADP + H(+). CIPK serine-threonine protein kinases interact with CBL proteins. Binding of a CBL protein to the regulatory NAF domain of CIPK protein lead to the activation of the kinase in a calcium-dependent manner. Downstream of CBL1, CBL2, CBL3 and CBL9, regulates by phosphorylation the K(+) conductance and uptake of AKT1. The protein is CBL-interacting serine/threonine-protein kinase 16 (CIPK16) of Arabidopsis thaliana (Mouse-ear cress).